The sequence spans 164 residues: uncharacterized protein (164 aa).

A Phosphoserine modification is found at serine 117.

This is an uncharacterized protein from Bacillus subtilis (strain 168).